The primary structure comprises 169 residues: MFGKLLPCAILVWCLFSLGQARQEETVEECERNIPASLKGRVCELRQYTPVQGKDMDSHMQCVLEVLGFVEDNGELVFQELLGVLKMVDPDGDHASSMKKCNAEAEKVDTSSKANTFYTCFLGTSSAQAFKYAVDYVELLRAGKLDMGTTFNAGQVSALMKQIDDGLCN.

A signal peptide spans methionine 1–alanine 21. Cystine bridges form between cysteine 30–cysteine 62, cysteine 43–cysteine 168, and cysteine 101–cysteine 120. Residues glutamate 31 and arginine 46 each contribute to the noradrenaline site. Glutamate 31 serves as a coordination point for serotonin. Histidine 59, tyrosine 118, aspartate 135, and glutamate 138 together coordinate serotonin. Residues tyrosine 118, aspartate 135, and glutamate 138 each coordinate histamine. Noradrenaline contacts are provided by aspartate 135 and glutamate 138.

It belongs to the PBP/GOBP family. As to expression, female saliva (at protein level). Female salivary gland. Low-level expression in female carcass without salivary glands. Not detected in male tissues.

It is found in the secreted. Functionally, modulates blood feeding of female mosquitoes on vertebrate species by binding and sequestering different mediators involved in the host response. Binds serotonin, noradrenaline, histamine and adrenaline. Inhibits histamine-, serotonin- and noradrenaline-induced smooth muscle contraction. Exhibits vasodilating activity. The sequence is that of Short form salivary protein D7R3 from Anopheles gambiae (African malaria mosquito).